A 156-amino-acid chain; its full sequence is Small ribosomal subunit protein uS7 (156 aa).

Belongs to the universal ribosomal protein uS7 family. In terms of assembly, part of the 30S ribosomal subunit. Contacts proteins S9 and S11.

In terms of biological role, one of the primary rRNA binding proteins, it binds directly to 16S rRNA where it nucleates assembly of the head domain of the 30S subunit. Is located at the subunit interface close to the decoding center, probably blocks exit of the E-site tRNA. The chain is Small ribosomal subunit protein uS7 from Geobacillus thermodenitrificans (strain NG80-2).